The following is a 111-amino-acid chain: Ig kappa chain V region 3368 (111 aa).

Positions 1–24 (ADIVMTQTPSSVSAAVGGTVTIKC) are framework-1. Residues 25 to 35 (QASESIGNELA) form a complementarity-determining-1 region. The framework-2 stretch occupies residues 36–50 (WYQQKPGQPPKLLIY). Positions 51-57 (RASKLAS) are complementarity-determining-2. Positions 58–89 (GVSSRFKGSGSGTEFTLTISGVQCDDAGIYYC) are framework-3. Residues 90 to 101 (QQDWNSNNVVNN) are complementarity-determining-3. Residues 102–111 (FGGGTEVVVK) form a framework-4 region.

This chain is Ig kappa chain V region 3368, found in Oryctolagus cuniculus (Rabbit).